The sequence spans 423 residues: Adenylosuccinate synthetase (423 aa).

GTP contacts are provided by residues 12 to 18 (GDEGKGK) and 40 to 42 (GHT). The active-site Proton acceptor is Asp13. Mg(2+) is bound by residues Asp13 and Gly40. IMP is bound by residues 13–16 (DEGK), 38–41 (NAGH), Thr129, Arg143, Gln221, Thr236, and Arg300. Catalysis depends on His41, which acts as the Proton donor. 296-302 (AVTGRER) lines the substrate pocket. GTP contacts are provided by residues Arg302, 328-330 (KSD), and 408-410 (SVG).

The protein belongs to the adenylosuccinate synthetase family. Homodimer. Requires Mg(2+) as cofactor.

The protein localises to the cytoplasm. The enzyme catalyses IMP + L-aspartate + GTP = N(6)-(1,2-dicarboxyethyl)-AMP + GDP + phosphate + 2 H(+). It participates in purine metabolism; AMP biosynthesis via de novo pathway; AMP from IMP: step 1/2. Functionally, plays an important role in the de novo pathway of purine nucleotide biosynthesis. Catalyzes the first committed step in the biosynthesis of AMP from IMP. The sequence is that of Adenylosuccinate synthetase from Phocaeicola vulgatus (strain ATCC 8482 / DSM 1447 / JCM 5826 / CCUG 4940 / NBRC 14291 / NCTC 11154) (Bacteroides vulgatus).